The chain runs to 31 residues: Jingzhaotoxin F7-15.33 (31 aa).

3 disulfide bridges follow: Cys2–Cys16, Cys9–Cys21, and Cys15–Cys28.

This sequence belongs to the neurotoxin 10 (Hwtx-1) family. In terms of tissue distribution, expressed by the venom gland.

The protein resides in the secreted. Probable ion channel inhibitor. This Chilobrachys guangxiensis (Chinese earth tiger tarantula) protein is Jingzhaotoxin F7-15.33.